Consider the following 715-residue polypeptide: Protein sneaky (715 aa).

Residues 1 to 32 (MLSLLTRPFLPIFCFLYGPQSEGSTRIQCLRR) are Cytoplasmic-facing. Residues 33 to 53 (FVTFLLGLVLGFLLWKLAALN) traverse the membrane as a helical segment. At 54–66 (FTLGRLFVNGATD) the chain is on the extracellular side. Residues 67–87 (LYVFIIFVLVTGTIFMLSLPV) traverse the membrane as a helical segment. The Cytoplasmic segment spans residues 88–109 (RAVILLIFVALVGKSGRTYLRA). The helical transmembrane segment at 110 to 130 (VAFAFIISGPIANLVENAGEV) threads the bilayer. At 131–373 (ARVFVCTTVL…FERQKRIFNK (243 aa)) the chain is on the extracellular side. The chain crosses the membrane as a helical span at residues 374–394 (VMGILQKILCLFMLRMVYVSI). Residues 395–457 (NYYVKYLNDV…FSRTHHESTT (63 aa)) are Cytoplasmic-facing. A helical transmembrane segment spans residues 458 to 478 (VCFNLLQFLLELVTAGLFILI). The Extracellular segment spans residues 479-553 (DHLVVELLQI…NAHVLPKKMY (75 aa)). A helical transmembrane segment spans residues 554–574 (YQLILLYLIIIVLIYQSTTFL). At 575-715 (RMRRVICSFF…VEVYTYRKEK (141 aa)) the chain is on the cytoplasmic side. Residues 655-691 (CMICRGLEDSTFTVCGNCGLPYCDDCAEDLNSVCFQC) form an RING-type; degenerate zinc finger.

In terms of tissue distribution, specifically expressed in testis.

It localises to the cytoplasmic vesicle. The protein resides in the secretory vesicle. Its subcellular location is the acrosome membrane. The protein localises to the cytoplasm. It is found in the cytoplasmic vesicle membrane. Functionally, component of the sperm acrosome membrane. Required for breakdown of the sperm plasma membrane after sperm entry into the egg, which is an essential prerequisite for successful fertilization. This is Protein sneaky from Drosophila melanogaster (Fruit fly).